The primary structure comprises 64 residues: Large ribosomal subunit protein eL37 (64 aa).

Residues cysteine 20, cysteine 23, cysteine 35, and cysteine 38 each coordinate Zn(2+). The C4-type zinc-finger motif lies at 20–38 (CRRCGRRAYHVRKKACAAC).

This sequence belongs to the eukaryotic ribosomal protein eL37 family. The cofactor is Zn(2+).

Binds to the 23S rRNA. The polypeptide is Large ribosomal subunit protein eL37 (Methanococcus vannielii (strain ATCC 35089 / DSM 1224 / JCM 13029 / OCM 148 / SB)).